The chain runs to 158 residues: UPF0329 protein ECU06_0050 (158 aa).

Belongs to the UPF0329 family.

The sequence is that of UPF0329 protein ECU06_0050 from Encephalitozoon cuniculi (strain GB-M1) (Microsporidian parasite).